Consider the following 542-residue polypeptide: CTP synthase (542 aa).

The tract at residues 1–265 is amidoligase domain; sequence MTRYIFITGG…DDEVLSVFGI (265 aa). S13 lines the CTP pocket. Residue S13 coordinates UTP. Residues 14 to 19 and D71 each bind ATP; that span reads SLGKGL. The Mg(2+) site is built by D71 and E139. CTP is bound by residues 146-148, 186-191, and K222; these read DIE and KTKPTQ. Residues 186–191 and K222 contribute to the UTP site; that span reads KTKPTQ. Positions 291-541 constitute a Glutamine amidotransferase type-1 domain; it reads TIAIVGKYTG…VEAAVEQSRL (251 aa). Residue G353 coordinates L-glutamine. C380 functions as the Nucleophile; for glutamine hydrolysis in the catalytic mechanism. L-glutamine-binding positions include 381-384, E404, and R469; that span reads FGMQ. Active-site residues include H514 and E516.

The protein belongs to the CTP synthase family. As to quaternary structure, homotetramer.

It carries out the reaction UTP + L-glutamine + ATP + H2O = CTP + L-glutamate + ADP + phosphate + 2 H(+). The catalysed reaction is L-glutamine + H2O = L-glutamate + NH4(+). It catalyses the reaction UTP + NH4(+) + ATP = CTP + ADP + phosphate + 2 H(+). It functions in the pathway pyrimidine metabolism; CTP biosynthesis via de novo pathway; CTP from UDP: step 2/2. With respect to regulation, allosterically activated by GTP, when glutamine is the substrate; GTP has no effect on the reaction when ammonia is the substrate. The allosteric effector GTP functions by stabilizing the protein conformation that binds the tetrahedral intermediate(s) formed during glutamine hydrolysis. Inhibited by the product CTP, via allosteric rather than competitive inhibition. Its function is as follows. Catalyzes the ATP-dependent amination of UTP to CTP with either L-glutamine or ammonia as the source of nitrogen. Regulates intracellular CTP levels through interactions with the four ribonucleotide triphosphates. This Parvibaculum lavamentivorans (strain DS-1 / DSM 13023 / NCIMB 13966) protein is CTP synthase.